A 245-amino-acid polypeptide reads, in one-letter code: 4-hydroxy-tetrahydrodipicolinate reductase (245 aa).

NAD(+) contacts are provided by residues 7 to 12 (GARGKV), 75 to 77 (GTT), and 102 to 105 (APNF). Histidine 132 serves as the catalytic Proton donor/acceptor. Histidine 133 is a (S)-2,3,4,5-tetrahydrodipicolinate binding site. The Proton donor role is filled by lysine 136. A (S)-2,3,4,5-tetrahydrodipicolinate-binding site is contributed by 142–143 (GT).

This sequence belongs to the DapB family.

The protein resides in the cytoplasm. The catalysed reaction is (S)-2,3,4,5-tetrahydrodipicolinate + NAD(+) + H2O = (2S,4S)-4-hydroxy-2,3,4,5-tetrahydrodipicolinate + NADH + H(+). The enzyme catalyses (S)-2,3,4,5-tetrahydrodipicolinate + NADP(+) + H2O = (2S,4S)-4-hydroxy-2,3,4,5-tetrahydrodipicolinate + NADPH + H(+). It participates in amino-acid biosynthesis; L-lysine biosynthesis via DAP pathway; (S)-tetrahydrodipicolinate from L-aspartate: step 4/4. Catalyzes the conversion of 4-hydroxy-tetrahydrodipicolinate (HTPA) to tetrahydrodipicolinate. This Mycolicibacterium vanbaalenii (strain DSM 7251 / JCM 13017 / BCRC 16820 / KCTC 9966 / NRRL B-24157 / PYR-1) (Mycobacterium vanbaalenii) protein is 4-hydroxy-tetrahydrodipicolinate reductase.